Reading from the N-terminus, the 176-residue chain is Adenylyl-sulfate kinase (176 aa).

12-19 (GLSGAGKT) serves as a coordination point for ATP. Catalysis depends on serine 86, which acts as the Phosphoserine intermediate.

This sequence belongs to the APS kinase family.

It catalyses the reaction adenosine 5'-phosphosulfate + ATP = 3'-phosphoadenylyl sulfate + ADP + H(+). Its pathway is sulfur metabolism; hydrogen sulfide biosynthesis; sulfite from sulfate: step 2/3. Its function is as follows. Catalyzes the synthesis of activated sulfate. The polypeptide is Adenylyl-sulfate kinase (Synechococcus sp. (strain JA-3-3Ab) (Cyanobacteria bacterium Yellowstone A-Prime)).